The primary structure comprises 968 residues: RNA polymerase-associated protein RapA (968 aa).

The Helicase ATP-binding domain maps to 164-334; it reads EVGQRHAPRV…FARLRLLDPD (171 aa). 177–184 contributes to the ATP binding site; the sequence is DEVGLGKT. Positions 280–283 match the DEAH box motif; that stretch reads DEAH. A Helicase C-terminal domain is found at 490–644; sequence RVEWLLNYLV…TCPTGRTIYD (155 aa).

It belongs to the SNF2/RAD54 helicase family. RapA subfamily. In terms of assembly, interacts with the RNAP. Has a higher affinity for the core RNAP than for the holoenzyme. Its ATPase activity is stimulated by binding to RNAP.

In terms of biological role, transcription regulator that activates transcription by stimulating RNA polymerase (RNAP) recycling in case of stress conditions such as supercoiled DNA or high salt concentrations. Probably acts by releasing the RNAP, when it is trapped or immobilized on tightly supercoiled DNA. Does not activate transcription on linear DNA. Probably not involved in DNA repair. This Yersinia pseudotuberculosis serotype O:1b (strain IP 31758) protein is RNA polymerase-associated protein RapA.